The chain runs to 131 residues: Small ribosomal subunit protein uS9 (131 aa).

It belongs to the universal ribosomal protein uS9 family.

In Glaesserella parasuis serovar 5 (strain SH0165) (Haemophilus parasuis), this protein is Small ribosomal subunit protein uS9.